We begin with the raw amino-acid sequence, 362 residues long: Phosphoserine aminotransferase (362 aa).

Positions 9 and 42 each coordinate L-glutamate. Pyridoxal 5'-phosphate-binding positions include 76–77 (GR), W102, T153, D174, and Q197. K198 carries the post-translational modification N6-(pyridoxal phosphate)lysine. A pyridoxal 5'-phosphate-binding site is contributed by 239–240 (NT).

This sequence belongs to the class-V pyridoxal-phosphate-dependent aminotransferase family. SerC subfamily. As to quaternary structure, homodimer. Pyridoxal 5'-phosphate serves as cofactor.

The protein localises to the cytoplasm. The enzyme catalyses O-phospho-L-serine + 2-oxoglutarate = 3-phosphooxypyruvate + L-glutamate. It catalyses the reaction 4-(phosphooxy)-L-threonine + 2-oxoglutarate = (R)-3-hydroxy-2-oxo-4-phosphooxybutanoate + L-glutamate. It participates in amino-acid biosynthesis; L-serine biosynthesis; L-serine from 3-phospho-D-glycerate: step 2/3. The protein operates within cofactor biosynthesis; pyridoxine 5'-phosphate biosynthesis; pyridoxine 5'-phosphate from D-erythrose 4-phosphate: step 3/5. In terms of biological role, catalyzes the reversible conversion of 3-phosphohydroxypyruvate to phosphoserine and of 3-hydroxy-2-oxo-4-phosphonooxybutanoate to phosphohydroxythreonine. This Klebsiella pneumoniae subsp. pneumoniae (strain ATCC 700721 / MGH 78578) protein is Phosphoserine aminotransferase.